The sequence spans 249 residues: Probable phosphatase Spea_1436 (249 aa).

Residues histidine 8, histidine 10, histidine 16, histidine 41, glutamate 74, histidine 102, histidine 132, aspartate 193, and histidine 195 each coordinate Zn(2+).

This sequence belongs to the PHP family. Zn(2+) is required as a cofactor.

The polypeptide is Probable phosphatase Spea_1436 (Shewanella pealeana (strain ATCC 700345 / ANG-SQ1)).